The chain runs to 815 residues: RNA-binding protein 5 (815 aa).

Residues 1 to 93 (MGSDKRVSRT…EHDYRHDISD (93 aa)) are disordered. Phosphoserine occurs at positions 18, 59, 69, 72, and 78. The RRM 1 domain maps to 98-178 (KTIMLRGLPI…KHIAMHYSNP (81 aa)). The RanBP2-type zinc-finger motif lies at 181-210 (KFEDWLCNKCCLNNFRKRLKCFRCGADKFD). The RRM 2 domain maps to 231-315 (DTIILRNIAP…KTIGVDFAKS (85 aa)). Positions 321 to 809 (VLSDGNRVSA…KDAVRKAMFA (489 aa)) are required for interaction with U2AF2. Residues 411 to 422 (QSPQLYNQTSNP) are compositionally biased toward polar residues. Disordered stretches follow at residues 411–468 (QSPQ…DESS) and 507–540 (PAAESSSHQQSGLPPAKEGKEKKEKPKSKTAQQI). A compositionally biased stretch (low complexity) spans 426-446 (PTEEAQPSTSTSTQAPAASPT). Position 444 is a phosphoserine (Ser-444). The sufficient for interaction with ACIN1, PRPF8, SFRS3, SNRPB, SNRPN, SNRNP70 and SNRNP200 stretch occupies residues 452–535 (TKYAVPDTST…KEKKEKPKSK (84 aa)). Ser-621 and Ser-624 each carry phosphoserine. Residues 647–677 (MACLLCRRQFPNKDALVRHQQLSDLHKQNMD) form a C2H2-type; atypical zinc finger. The 47-residue stretch at 743–789 (HSNIGNKMLQAMGWREGSGLGRKCQGITAPIEAQVRLKGAGLGAKGS) folds into the G-patch domain.

Belongs to the RBM5/RBM10 family. As to quaternary structure, component of the spliceosome A complex (also known as the prespliceosome). Appears to dissociate from the spliceosome upon formation of the spliceosome B complex (also known as the precatalytic spliceosome), in which the heterotrimeric U4/U6.U5 snRNPs are bound. Interacts with U2AF2; this interaction is direct. Also interacts with ACIN1, PRPF8, SFRS3, SNRPB, SNRPN, SNRNP70 and SNRNP200; these interactions may be indirect. In terms of tissue distribution, isoform 5 is widely expressed in normal tissues and is expressed at increased levels in T-leukemic cell lines.

It localises to the nucleus. Its function is as follows. Component of the spliceosome A complex. Binds to ssRNA containing the consensus sequence 5'-AGGUAA-3'. Regulates alternative splicing of a number of mRNAs. May modulate splice site pairing after recruitment of the U1 and U2 snRNPs to the 5' and 3' splice sites of the intron. May both positively and negatively regulate apoptosis by regulating the alternative splicing of several genes involved in this process, including FAS and CASP2/caspase-2. In the case of FAS, promotes exclusion of exon 6 thereby producing a soluble form of FAS that inhibits apoptosis. In the case of CASP2/caspase-2, promotes exclusion of exon 9 thereby producing a catalytically active form of CASP2/Caspase-2 that induces apoptosis. The protein is RNA-binding protein 5 (RBM5) of Homo sapiens (Human).